The following is a 249-amino-acid chain: Receptor-transporting protein 4 (249 aa).

Residues 1-227 (MLFPDDFSTW…QGCREPPQRE (227 aa)) are Cytoplasmic-facing. A 3CxxC-type zinc finger spans residues 50 to 162 (TVLGRFQCSR…DTRNCEACSL (113 aa)). The disordered stretch occupies residues 173–208 (KVKPPRSPSPLPKSSSPSKSCPPPPQTRNTDFGNKT). Residues 199–208 (TRNTDFGNKT) are compositionally biased toward polar residues. A helical membrane pass occupies residues 228–248 (IEPPLFLFLSIAAFALFSLFT).

Belongs to the TMEM7 family. As to quaternary structure, interacts with TASR16. Interacts with OPRD1 and OPRM1; the interaction promotes cell surface localization of the OPDR1-OPRM1 heterodimer. Expressed at low levels in olfactory neurons. Upon viral infection, highly expressed in brain and different cells of nervous tissue.

The protein resides in the membrane. The protein localises to the cytoplasm. Functionally, chaperone protein that facilitates the trafficking and functional cell surface expression of some G-protein coupled receptors (GPCRs). Promotes functional expression of the bitter taste receptor TAS2R16. Also promotes functional expression of the opioid receptor heterodimer OPRD1-OPRM1. In addition, acts as a potent IFN-inducible suppressor of pathogens including lyssavirus rabies, influenza A or yellow fever virus. Mechanistically, associates with the viral replicase, binds viral RNA, and thereby suppresses viral genome amplification that replicates at the endoplasmic reticulum. In addition, restores antiviral signaling by interacting with and sequestering influenza virus protein NS1. The chain is Receptor-transporting protein 4 (Rtp4) from Mus musculus (Mouse).